The sequence spans 681 residues: Phosphomethylpyrimidine synthase (681 aa).

The span at 1–13 (MSNNTTSLPAENS) shows a compositional bias: polar residues. The tract at residues 1 to 29 (MSNNTTSLPAENSSHPRKGTPIRKKQREE) is disordered. Residues 15-25 (HPRKGTPIRKK) show a composition bias toward basic residues. Residues N254, M283, Y312, H348, 368–370 (SRG), 409–412 (DGLR), and E448 each bind substrate. Zn(2+) is bound at residue H452. Y475 is a substrate binding site. H516 contacts Zn(2+). [4Fe-4S] cluster is bound by residues C596, C599, and C604. Over residues 658–667 (FRSRGSELYH) the composition is skewed to basic and acidic residues. Positions 658-681 (FRSRGSELYHRPANLSAEANNEPT) are disordered.

The protein belongs to the ThiC family. Homodimer. [4Fe-4S] cluster serves as cofactor.

It carries out the reaction 5-amino-1-(5-phospho-beta-D-ribosyl)imidazole + S-adenosyl-L-methionine = 4-amino-2-methyl-5-(phosphooxymethyl)pyrimidine + CO + 5'-deoxyadenosine + formate + L-methionine + 3 H(+). Its pathway is cofactor biosynthesis; thiamine diphosphate biosynthesis. In terms of biological role, catalyzes the synthesis of the hydroxymethylpyrimidine phosphate (HMP-P) moiety of thiamine from aminoimidazole ribotide (AIR) in a radical S-adenosyl-L-methionine (SAM)-dependent reaction. This chain is Phosphomethylpyrimidine synthase, found in Yersinia pseudotuberculosis serotype I (strain IP32953).